A 217-amino-acid chain; its full sequence is Uracil-DNA glycosylase (217 aa).

Asp-62 acts as the Proton acceptor in catalysis.

The protein belongs to the uracil-DNA glycosylase (UDG) superfamily. UNG family.

The protein resides in the cytoplasm. The enzyme catalyses Hydrolyzes single-stranded DNA or mismatched double-stranded DNA and polynucleotides, releasing free uracil.. Functionally, excises uracil residues from the DNA which can arise as a result of misincorporation of dUMP residues by DNA polymerase or due to deamination of cytosine. This Streptococcus pneumoniae (strain JJA) protein is Uracil-DNA glycosylase.